A 638-amino-acid chain; its full sequence is NBPF family member NBPF6 (638 aa).

2 coiled-coil regions span residues 10–43 (SERAEMNILEINQELRSQLAESNQQFRDLKEKFL) and 69–115 (DSVL…KLRE). Positions 157 to 285 (HLVHKLSPEN…VPPRHHDKSN (129 aa)) are disordered. Over residues 165–179 (ENDEDEDEDEDDKDE) the composition is skewed to acidic residues. Positions 174–261 (EDDKDEEVEK…EEEEALNIPP (88 aa)) constitute an Olduvai 1 domain. The span at 192–202 (EVQKTEEKEVP) shows a compositional bias: basic and acidic residues. A compositionally biased stretch (low complexity) spans 214–226 (SNSHNPSNSNQPH). Basic and acidic residues-rich tracts occupy residues 232–251 (TFKEHEVDSALVVESEHPHD) and 264–273 (QNDHEEEEGK). 2 Olduvai domains span residues 326–399 (EKQS…ALVD) and 400–503 (KIKK…SQAQ). The tract at residues 563–584 (MKNPPQLEDDALEGSASNTQGR) is disordered.

The protein belongs to the NBPF family.

The protein localises to the cytoplasm. This is NBPF family member NBPF6 from Homo sapiens (Human).